We begin with the raw amino-acid sequence, 59 residues long: Small ribosomal subunit protein bS21 (59 aa).

It belongs to the bacterial ribosomal protein bS21 family.

This Acaryochloris marina (strain MBIC 11017) protein is Small ribosomal subunit protein bS21.